Reading from the N-terminus, the 347-residue chain is Uroporphyrinogen decarboxylase (347 aa).

Residues 24-28, phenylalanine 42, aspartate 73, tyrosine 150, threonine 205, and histidine 320 each bind substrate; that span reads RQAGR.

This sequence belongs to the uroporphyrinogen decarboxylase family. Homodimer.

The protein resides in the cytoplasm. It catalyses the reaction uroporphyrinogen III + 4 H(+) = coproporphyrinogen III + 4 CO2. Its pathway is porphyrin-containing compound metabolism; protoporphyrin-IX biosynthesis; coproporphyrinogen-III from 5-aminolevulinate: step 4/4. Functionally, catalyzes the decarboxylation of four acetate groups of uroporphyrinogen-III to yield coproporphyrinogen-III. This Gloeobacter violaceus (strain ATCC 29082 / PCC 7421) protein is Uroporphyrinogen decarboxylase.